The primary structure comprises 90 residues: Probable Fe(2+)-trafficking protein (90 aa).

This sequence belongs to the Fe(2+)-trafficking protein family.

Functionally, could be a mediator in iron transactions between iron acquisition and iron-requiring processes, such as synthesis and/or repair of Fe-S clusters in biosynthetic enzymes. The protein is Probable Fe(2+)-trafficking protein of Leptothrix cholodnii (strain ATCC 51168 / LMG 8142 / SP-6) (Leptothrix discophora (strain SP-6)).